The primary structure comprises 245 residues: Polyhedrin (245 aa).

Belongs to the polyhedrin family.

Major component of the virus occlusion bodies, which are large proteinaceous structures (polyhedra), that protect the virus from the outside environment for extended periods until they are ingested by insect larvae. In Lepidoptera (butterflies and moths), this protein is Polyhedrin (PH).